The chain runs to 488 residues: Probable 26S proteasome non-ATPase regulatory subunit 3 (488 aa).

The disordered stretch occupies residues 1–20 (MTQDVEMKEQAAPPSNSLSS). Residues 240-421 (SRYLFYLGKI…GWMVSKETGD (182 aa)) form the PCI domain. Positions 452–488 (FPPNSHKEKESAEKRRERQQQEQELAKHIAEEDDDDF) are disordered. The span at 456–481 (SHKEKESAEKRRERQQQEQELAKHIA) shows a compositional bias: basic and acidic residues.

Belongs to the proteasome subunit S3 family. In terms of assembly, the 26S proteasome is composed of a core protease, known as the 20S proteasome, capped at one or both ends by the 19S regulatory complex (RC). The RC is composed of at least 18 different subunits in two subcomplexes, the base and the lid, which form the portions proximal and distal to the 20S proteolytic core, respectively.

The protein resides in the nucleus. Its function is as follows. Acts as a regulatory subunit of the 26 proteasome which is involved in the ATP-dependent degradation of ubiquitinated proteins. This is Probable 26S proteasome non-ATPase regulatory subunit 3 (21D7) from Nicotiana tabacum (Common tobacco).